A 129-amino-acid polypeptide reads, in one-letter code: UPF0325 protein Ent638_0703 (129 aa).

This sequence belongs to the UPF0325 family.

The sequence is that of UPF0325 protein Ent638_0703 from Enterobacter sp. (strain 638).